We begin with the raw amino-acid sequence, 215 residues long: MKQIIAKNGLILSLFAIITSGLIALTYFGTQEQIELQRQQTLLAILDELVPRGSYDNLMQHDCVLVTSQAYLGSNSPQHIYRATRAGEPVAAVIEATAPNGYSGRIELVVGLSGDATVSGVRVIDHKETPGLGDKIDLRISDWVLGFNNQQLTQDNASNWAVKKDGGQFDQFTGATITPRAVVSAVKNTALYYQANKEAIFSASNECRSQLASQG.

Residues 9–29 form a helical membrane-spanning segment; it reads GLILSLFAIITSGLIALTYFG. Residue T176 is modified to FMN phosphoryl threonine.

The protein belongs to the RnfG family. In terms of assembly, the complex is composed of six subunits: RnfA, RnfB, RnfC, RnfD, RnfE and RnfG. The cofactor is FMN.

Its subcellular location is the cell inner membrane. Its function is as follows. Part of a membrane-bound complex that couples electron transfer with translocation of ions across the membrane. This is Ion-translocating oxidoreductase complex subunit G from Pseudoalteromonas atlantica (strain T6c / ATCC BAA-1087).